Consider the following 199-residue polypeptide: MATYARSVERLIAELSRLPTIGPRSAQRIAFHIIRTRKEEALALAEALREVKERIRPCRRCFNLTEGEECDICRDPRRDRSVICVVEDPYDIGPIERTGEYRGLYHVLGGALSPLDGVEPEDLRIAELVERVRSEGTRELILATNPNTTGEATAMFIAQEVRELPVRVTALASGLPVGGDLEYADEVTLGRAFAGRREL.

The C4-type zinc finger occupies 58–73; sequence CRRCFNLTEGEECDIC. A Toprim domain is found at 81–176; it reads SVICVVEDPY…RVTALASGLP (96 aa).

It belongs to the RecR family.

May play a role in DNA repair. It seems to be involved in an RecBC-independent recombinational process of DNA repair. It may act with RecF and RecO. This chain is Recombination protein RecR, found in Rubrobacter xylanophilus (strain DSM 9941 / JCM 11954 / NBRC 16129 / PRD-1).